Here is a 102-residue protein sequence, read N- to C-terminus: Small ribosomal subunit protein uS10 (102 aa).

Belongs to the universal ribosomal protein uS10 family. In terms of assembly, part of the 30S ribosomal subunit.

Functionally, involved in the binding of tRNA to the ribosomes. This chain is Small ribosomal subunit protein uS10, found in Desulforamulus reducens (strain ATCC BAA-1160 / DSM 100696 / MI-1) (Desulfotomaculum reducens).